Here is a 675-residue protein sequence, read N- to C-terminus: Transketolase, chloroplastic (675 aa).

Thiamine diphosphate-binding positions include histidine 78 and 127–129; that span reads GPL. Mg(2+) is bound at residue aspartate 168. The thiamine diphosphate site is built by glycine 169, glutamate 173, and asparagine 198. Mg(2+) is bound by residues asparagine 198 and isoleucine 200. Histidine 275 contacts thiamine diphosphate. Substrate-binding residues include histidine 275, arginine 369, and serine 396. Residues glutamate 423 and 450 to 453 each bind thiamine diphosphate; that span reads FTDY. Residue glutamate 423 is the Proton donor of the active site. Residues histidine 474, aspartate 482, and arginine 533 each contribute to the substrate site.

Homodimer. Mg(2+) is required as a cofactor. Requires Ca(2+) as cofactor. Mn(2+) serves as cofactor. The cofactor is Co(2+). It depends on thiamine diphosphate as a cofactor.

Its subcellular location is the plastid. It localises to the chloroplast thylakoid membrane. The enzyme catalyses D-sedoheptulose 7-phosphate + D-glyceraldehyde 3-phosphate = aldehydo-D-ribose 5-phosphate + D-xylulose 5-phosphate. The protein operates within carbohydrate biosynthesis; Calvin cycle. Catalyzes the reversible transfer of a two-carbon ketol group from fructose-6-phosphate or sedoheptulose-7-phosphate to glyceraldehyde-3-phosphate to yield xylulose-5-phosphate and erythrose-4-phosphate or ribose-5-phosphate, respectively. In Zea mays (Maize), this protein is Transketolase, chloroplastic.